Consider the following 258-residue polypeptide: Regulatory protein RecX (258 aa).

This sequence belongs to the RecX family.

The protein localises to the cytoplasm. In terms of biological role, modulates RecA activity. In Streptococcus thermophilus (strain CNRZ 1066), this protein is Regulatory protein RecX.